A 375-amino-acid polypeptide reads, in one-letter code: PTS system fructose-specific EIIC component (375 aa).

Residues 16 to 370 (VKEDLMTGVS…KPNFDAKMAA (355 aa)) enclose the PTS EIIC type-2 domain. A run of 10 helical transmembrane segments spans residues 24-44 (VSFMIPFVTIGGIFLALGYAV), 68-88 (IGVAGLTLMVPVLGAYIAYAI), 93-113 (GLAPGFILSYIIQQGNVLQAA), 122-142 (GSAGAGYLGAIVAGFLAGIVA), 160-180 (VLLIPVATTAVLTPVMLFVLG), 203-223 (AILLGGILGAMMAADMGGPIN), 238-258 (VTAPMAAVMIAGMVPPIGLAL), 279-299 (VLLGFSFITEGAIPYAAADPA), 301-321 (VIPSVVAGSAVAGAASMALGV), and 340-360 (FMFIACILLGSIVTAVIATAI).

It localises to the cell membrane. In terms of biological role, the phosphoenolpyruvate-dependent sugar phosphotransferase system (sugar PTS), a major carbohydrate active transport system, catalyzes the phosphorylation of incoming sugar substrates concomitantly with their translocation across the cell membrane. The enzyme II PtfABC PTS system is involved in fructose transport. The protein is PTS system fructose-specific EIIC component of Haloferax volcanii (strain ATCC 29605 / DSM 3757 / JCM 8879 / NBRC 14742 / NCIMB 2012 / VKM B-1768 / DS2) (Halobacterium volcanii).